Consider the following 264-residue polypeptide: Hydroxyethylthiazole kinase (264 aa).

M52 is a binding site for substrate. ATP is bound by residues R127 and T173. Residue G200 participates in substrate binding.

Belongs to the Thz kinase family. The cofactor is Mg(2+).

It catalyses the reaction 5-(2-hydroxyethyl)-4-methylthiazole + ATP = 4-methyl-5-(2-phosphooxyethyl)-thiazole + ADP + H(+). The protein operates within cofactor biosynthesis; thiamine diphosphate biosynthesis; 4-methyl-5-(2-phosphoethyl)-thiazole from 5-(2-hydroxyethyl)-4-methylthiazole: step 1/1. In terms of biological role, catalyzes the phosphorylation of the hydroxyl group of 4-methyl-5-beta-hydroxyethylthiazole (THZ). In Serratia proteamaculans (strain 568), this protein is Hydroxyethylthiazole kinase.